The following is a 144-amino-acid chain: Bacilliredoxin BLi02323/BL05224 (144 aa).

It belongs to the bacilliredoxin family.

This chain is Bacilliredoxin BLi02323/BL05224, found in Bacillus licheniformis (strain ATCC 14580 / DSM 13 / JCM 2505 / CCUG 7422 / NBRC 12200 / NCIMB 9375 / NCTC 10341 / NRRL NRS-1264 / Gibson 46).